The following is a 200-amino-acid chain: Protein GrpE (200 aa).

Residues methionine 1–asparagine 11 show a composition bias toward polar residues. Residues methionine 1–alanine 29 are disordered.

It belongs to the GrpE family. In terms of assembly, homodimer.

It is found in the cytoplasm. Functionally, participates actively in the response to hyperosmotic and heat shock by preventing the aggregation of stress-denatured proteins, in association with DnaK and GrpE. It is the nucleotide exchange factor for DnaK and may function as a thermosensor. Unfolded proteins bind initially to DnaJ; upon interaction with the DnaJ-bound protein, DnaK hydrolyzes its bound ATP, resulting in the formation of a stable complex. GrpE releases ADP from DnaK; ATP binding to DnaK triggers the release of the substrate protein, thus completing the reaction cycle. Several rounds of ATP-dependent interactions between DnaJ, DnaK and GrpE are required for fully efficient folding. The protein is Protein GrpE of Shewanella halifaxensis (strain HAW-EB4).